An 854-amino-acid polypeptide reads, in one-letter code: ATP-dependent zinc metalloprotease FtsH (854 aa).

Residues 1 to 5 (MNRKT) are Cytoplasmic-facing. Residues 6-26 (VFRNVLLVAVVLLVIYAFSYF) form a helical membrane-spanning segment. The Extracellular segment spans residues 27 to 112 (SNDTRDFKTV…FNTTVTQESW (86 aa)). The helical transmembrane segment at 113 to 133 (LTSILLFVLPMIILFGIFFFV) threads the bilayer. The Cytoplasmic segment spans residues 134 to 854 (MNRMQGGGGR…ARWDGPDGSR (721 aa)). Residue 207–214 (GPPGTGKT) participates in ATP binding. Residue His-429 participates in Zn(2+) binding. The active site involves Glu-430. 2 residues coordinate Zn(2+): His-433 and Asp-505. A disordered region spans residues 658 to 854 (AGAPNSGVPN…ARWDGPDGSR (197 aa)). Composition is skewed to low complexity over residues 661–692 (PNSG…AQPS) and 698–719 (APQQ…WSAP). A compositionally biased stretch (pro residues) spans 720–730 (GWPPRENPSPT). Low complexity predominate over residues 749 to 778 (NQSQGQYGQPQHGQPQPDQGQYGQPHPGQQ). Polar residues predominate over residues 812–822 (GNPSGENQWQS). Over residues 825–834 (PEQPQTPPPH) the composition is skewed to pro residues.

It in the central section; belongs to the AAA ATPase family. The protein in the C-terminal section; belongs to the peptidase M41 family. In terms of assembly, homohexamer. It depends on Zn(2+) as a cofactor.

The protein resides in the cell membrane. Acts as a processive, ATP-dependent zinc metallopeptidase for both cytoplasmic and membrane proteins. Plays a role in the quality control of integral membrane proteins. The protein is ATP-dependent zinc metalloprotease FtsH of Rhodococcus erythropolis (strain PR4 / NBRC 100887).